Consider the following 397-residue polypeptide: MSKKKKWLIGGAICAGVLVLAGIGAGGFYFFTHMNQVAVSSEPYAESVAVYMGGDSESGQTFSGKVEPEKQQKVYIDSEKGSIKKTYVKEGDQVKKGDKLFEYEGEDHSDEVEQANLQIEMTNLQINRLQKSITETEKKLKVAGKEEKNQLQDELDQTNFDLKTSQLELKQHQKELAGLTKNKGSNVITSKHDGIVQSVNQDIADGATGDQAAGPYIQIVSTGKYLVKSQINELLMDTIKKGSKVRVTLKTGGEGEWKGKVTSIGKLPAGAGEGEESESFADEEMNPQSSNYPFTILLDSHKGLEVGYHVNIEVMSDNADADTIKLPSDMVIQDDGEPYVWKADENHKAVKQPVEIGETDENDMVEIKSGLTPEDYVIYPDPAVKEGKQVTVNADTE.

The chain crosses the membrane as a helical span at residues 8 to 28; it reads LIGGAICAGVLVLAGIGAGGF. Positions 106-183 form a coiled coil; it reads EDHSDEVEQA…KELAGLTKNK (78 aa).

It belongs to the membrane fusion protein (MFP) (TC 8.A.1) family.

The protein localises to the cell membrane. This Bacillus subtilis (strain 168) protein is Putative efflux system protein YvrP (yvrP).